The sequence spans 77 residues: U8-lycotoxin-Ls1t (77 aa).

A signal peptide spans Met1–Ala20. Residues Gln21–Lys26 constitute a propeptide that is removed on maturation.

The protein belongs to the neurotoxin 19 (CSTX) family. 08 (U8-Lctx) subfamily. Post-translationally, contains 4 disulfide bonds. In terms of tissue distribution, expressed by the venom gland.

Its subcellular location is the secreted. The protein is U8-lycotoxin-Ls1t of Lycosa singoriensis (Wolf spider).